The primary structure comprises 139 residues: uncharacterized protein (139 aa).

The segment at 83–109 (LIPPKKTSPATSSSLKPPRRPRGCLNG) is disordered. Positions 86-98 (PKKTSPATSSSLK) are enriched in low complexity.

It to M.pneumoniae MPN_091 and MPN_463.

This is an uncharacterized protein from Mycoplasma pneumoniae (strain ATCC 29342 / M129 / Subtype 1) (Mycoplasmoides pneumoniae).